The primary structure comprises 81 residues: MKTLLLTLVVVTIVFLDLGYTMTCCNQQSSQPKTTTTCAESSCYKKTWRDHRGTITERGCGCPNVKPGVQINCCKTDECNN.

An N-terminal signal peptide occupies residues 1 to 21; the sequence is MKTLLLTLVVVTIVFLDLGYT. Intrachain disulfides connect C24/C43, C38/C60, C62/C73, and C74/C79.

The protein belongs to the three-finger toxin family. Short-chain subfamily. Type I alpha-neurotoxin sub-subfamily. In terms of tissue distribution, expressed by the venom gland.

The protein resides in the secreted. Binds to muscle nicotinic acetylcholine receptor (nAChR) and inhibit acetylcholine from binding to the receptor, thereby impairing neuromuscular transmission. This Notechis scutatus scutatus (Mainland tiger snake) protein is Short neurotoxin 1.